Reading from the N-terminus, the 280-residue chain is UPF0494 membrane protein SPAC212.01c (280 aa).

4 helical membrane-spanning segments follow: residues 107–127, 144–164, 178–198, and 199–219; these read WPLL…KFEV, IWVP…SLIF, VIIA…GMII, and AALG…LYFG.

This sequence belongs to the UPF0494 family.

It is found in the membrane. The chain is UPF0494 membrane protein SPAC212.01c from Schizosaccharomyces pombe (strain 972 / ATCC 24843) (Fission yeast).